Here is a 294-residue protein sequence, read N- to C-terminus: C-type lectin domain family 4 member G (294 aa).

Residues 1 to 30 (MNTGEYNKLGSAIEEVSRGQLGRWECYKQR) are Cytoplasmic-facing. Residues 31 to 51 (LFFLVLALLVATVLWALILST) form a helical; Signal-anchor for type II membrane protein membrane-spanning segment. At 52–294 (LLSSASSKLR…WICEKRSSCY (243 aa)) the chain is on the extracellular side. Asn73 carries N-linked (GlcNAc...) asparagine glycosylation. Residues 100 to 151 (AQLQTTLAEFKDIQAKLMEQESILKELQERVTQDLAKASRDRENIRSELFQA) adopt a coiled-coil conformation. 3 N-linked (GlcNAc...) asparagine glycosylation sites follow: Asn159, Asn246, and Asn256. In terms of domain architecture, C-type lectin spans 172 to 287 (FQGSCYYFSE…CTNERDGWIC (116 aa)). Residues Cys264 and Cys278 are joined by a disulfide bond.

The protein localises to the cell membrane. Binds mannose, N-acetylglucosamine (GlcNAc) and fucose, but not galactose, in a Ca(2+)-dependent manner. The polypeptide is C-type lectin domain family 4 member G (Clec4g) (Mus musculus (Mouse)).